The chain runs to 502 residues: MSQEKYIMAIDQGTTSSRAIIFNKKGEKVSSSQKEFTQIFPQAGWVEHNANEIWNSVQSVIAGAFIESGVKPNQIEAIGITNQRETTVVWDKNTGLPIYNAIVWQSRQTAPLAEQLKSQGYVEKFHEKTGLIIDAYFSATKVRWILDHVEGAQERAEKGELLFGTIDTWLVWKLTDGAAHVTDYSNAARTMLYNIKELKWDDEILEILNIPKAMLPEVRSNSEIYGKTAPFHFYGGEVPISGMAGDQQAALFGQLAFEPGMVKNTYGTGSFIIMNTGEEMQLSENNLLTTIGYGINGKVYYALEGSIFIAGSAIQWLRDGLRMVENSPESEKYALDSHNNDEVYVVPAFTGLGAPYWDQNARGSVFGLTRGTSKEDFIKATLQSIAYQVRDIIDTMQVDAKTAIQVLKVDGGAAMNNFLMQFQADILGIDIARAKNLETTALGAAFLAGLSVGYWKDLDELRTLNETGELFEPSMNESRKEQLYKGWKKAVKATQAFAEIDD.

Threonine 14 provides a ligand contact to ADP. ATP contacts are provided by threonine 14, threonine 15, and serine 16. Threonine 14 serves as a coordination point for sn-glycerol 3-phosphate. Arginine 18 provides a ligand contact to ADP. Positions 84, 85, and 136 each coordinate sn-glycerol 3-phosphate. Residues arginine 84, glutamate 85, and tyrosine 136 each coordinate glycerol. Histidine 232 is subject to Phosphohistidine; by HPr. Aspartate 246 is a sn-glycerol 3-phosphate binding site. 2 residues coordinate glycerol: aspartate 246 and glutamine 247. ADP-binding residues include threonine 268 and glycine 311. Residues threonine 268, glycine 311, glutamine 315, and glycine 412 each contribute to the ATP site. Positions 412 and 416 each coordinate ADP.

Belongs to the FGGY kinase family. In terms of assembly, homotetramer and homodimer (in equilibrium). The phosphoenolpyruvate-dependent sugar phosphotransferase system (PTS), including enzyme I, and histidine-containing protein (HPr) are required for the phosphorylation, which leads to the activation of the enzyme.

The catalysed reaction is glycerol + ATP = sn-glycerol 3-phosphate + ADP + H(+). It functions in the pathway polyol metabolism; glycerol degradation via glycerol kinase pathway; sn-glycerol 3-phosphate from glycerol: step 1/1. With respect to regulation, activated by phosphorylation and inhibited by fructose 1,6-bisphosphate (FBP). Functionally, key enzyme in the regulation of glycerol uptake and metabolism. Catalyzes the phosphorylation of glycerol to yield sn-glycerol 3-phosphate. This Streptococcus sanguinis (strain SK36) protein is Glycerol kinase.